A 213-amino-acid chain; its full sequence is Thiopurine S-methyltransferase (213 aa).

Positions 10, 45, 66, and 121 each coordinate S-adenosyl-L-methionine.

It belongs to the class I-like SAM-binding methyltransferase superfamily. TPMT family.

Its subcellular location is the cytoplasm. The catalysed reaction is S-adenosyl-L-methionine + a thiopurine = S-adenosyl-L-homocysteine + a thiopurine S-methylether.. This chain is Thiopurine S-methyltransferase, found in Aliivibrio salmonicida (strain LFI1238) (Vibrio salmonicida (strain LFI1238)).